The primary structure comprises 508 residues: Photosystem II CP47 reaction center protein (508 aa).

The next 6 membrane-spanning stretches (helical) occupy residues 21-36 (SVHI…WAGS), 101-115 (IVFS…IWHW), 140-156 (GIHL…FGAF), 203-218 (IAAG…FHLS), 237-252 (VLSS…AFVV), and 457-472 (TFAL…HGAR).

Belongs to the PsbB/PsbC family. PsbB subfamily. As to quaternary structure, PSII is composed of 1 copy each of membrane proteins PsbA, PsbB, PsbC, PsbD, PsbE, PsbF, PsbH, PsbI, PsbJ, PsbK, PsbL, PsbM, PsbT, PsbX, PsbY, PsbZ, Psb30/Ycf12, at least 3 peripheral proteins of the oxygen-evolving complex and a large number of cofactors. It forms dimeric complexes. It depends on Binds multiple chlorophylls. PSII binds additional chlorophylls, carotenoids and specific lipids. as a cofactor.

It localises to the plastid. The protein resides in the chloroplast thylakoid membrane. In terms of biological role, one of the components of the core complex of photosystem II (PSII). It binds chlorophyll and helps catalyze the primary light-induced photochemical processes of PSII. PSII is a light-driven water:plastoquinone oxidoreductase, using light energy to abstract electrons from H(2)O, generating O(2) and a proton gradient subsequently used for ATP formation. The chain is Photosystem II CP47 reaction center protein from Zea mays (Maize).